The sequence spans 484 residues: Proline--tRNA ligase (484 aa).

The protein belongs to the class-II aminoacyl-tRNA synthetase family. ProS type 3 subfamily. As to quaternary structure, homodimer.

It localises to the cytoplasm. It carries out the reaction tRNA(Pro) + L-proline + ATP = L-prolyl-tRNA(Pro) + AMP + diphosphate. Its function is as follows. Catalyzes the attachment of proline to tRNA(Pro) in a two-step reaction: proline is first activated by ATP to form Pro-AMP and then transferred to the acceptor end of tRNA(Pro). The polypeptide is Proline--tRNA ligase (Haloarcula marismortui (strain ATCC 43049 / DSM 3752 / JCM 8966 / VKM B-1809) (Halobacterium marismortui)).